Here is a 230-residue protein sequence, read N- to C-terminus: MAKKGKKYQEAASKVDRTQHYSVEEAIKLAKETSIANFDASVEVAFRLGIDTRKNDQQIRGAVVLPNGTGKSQSVLVFAKGDKIAEAEAAGTDYVGEAEYVQKIQQGWFDFDVVVATPDMMGEVGKLGRVLGPKGLMPNPKTGTVTMDVKKAVEEIKAGKVEYRAEKAGIVHASIGKVSFTDEQLIENFNTLQDVLAKAKPSSAKGTYFKSVAVTTTMGPGVKIDTASFK.

This sequence belongs to the universal ribosomal protein uL1 family. In terms of assembly, part of the 50S ribosomal subunit.

Binds directly to 23S rRNA. The L1 stalk is quite mobile in the ribosome, and is involved in E site tRNA release. Its function is as follows. Protein L1 is also a translational repressor protein, it controls the translation of the L11 operon by binding to its mRNA. The polypeptide is Large ribosomal subunit protein uL1 (Staphylococcus aureus (strain N315)).